The sequence spans 244 residues: Cell division protein ZapD (244 aa).

The protein belongs to the ZapD family. As to quaternary structure, interacts with FtsZ.

It localises to the cytoplasm. In terms of biological role, cell division factor that enhances FtsZ-ring assembly. Directly interacts with FtsZ and promotes bundling of FtsZ protofilaments, with a reduction in FtsZ GTPase activity. In Shewanella baltica (strain OS185), this protein is Cell division protein ZapD.